A 154-amino-acid polypeptide reads, in one-letter code: Dau c 1 isoallergen Dau c 1.0301 (154 aa).

Belongs to the BetVI family. As to expression, expressed in roots.

The protein is Dau c 1 isoallergen Dau c 1.0301 of Daucus carota (Wild carrot).